Reading from the N-terminus, the 156-residue chain is ATP synthase subunit b (156 aa).

A helical transmembrane segment spans residues 7-29 (LIGQSVAFLIFVWFCMKFVWPPL).

This sequence belongs to the ATPase B chain family. F-type ATPases have 2 components, F(1) - the catalytic core - and F(0) - the membrane proton channel. F(1) has five subunits: alpha(3), beta(3), gamma(1), delta(1), epsilon(1). F(0) has three main subunits: a(1), b(2) and c(10-14). The alpha and beta chains form an alternating ring which encloses part of the gamma chain. F(1) is attached to F(0) by a central stalk formed by the gamma and epsilon chains, while a peripheral stalk is formed by the delta and b chains.

It is found in the cell inner membrane. In terms of biological role, f(1)F(0) ATP synthase produces ATP from ADP in the presence of a proton or sodium gradient. F-type ATPases consist of two structural domains, F(1) containing the extramembraneous catalytic core and F(0) containing the membrane proton channel, linked together by a central stalk and a peripheral stalk. During catalysis, ATP synthesis in the catalytic domain of F(1) is coupled via a rotary mechanism of the central stalk subunits to proton translocation. Functionally, component of the F(0) channel, it forms part of the peripheral stalk, linking F(1) to F(0). This Shewanella denitrificans (strain OS217 / ATCC BAA-1090 / DSM 15013) protein is ATP synthase subunit b.